A 160-amino-acid polypeptide reads, in one-letter code: 6,7-dimethyl-8-ribityllumazine synthase (160 aa).

5-amino-6-(D-ribitylamino)uracil contacts are provided by residues F32, 66–68, and 90–92; these read ALE and CII. Residue 95-96 participates in (2S)-2-hydroxy-3-oxobutyl phosphate binding; the sequence is ET. Catalysis depends on H98, which acts as the Proton donor. Residue N123 coordinates 5-amino-6-(D-ribitylamino)uracil. R137 lines the (2S)-2-hydroxy-3-oxobutyl phosphate pocket.

It belongs to the DMRL synthase family.

It carries out the reaction (2S)-2-hydroxy-3-oxobutyl phosphate + 5-amino-6-(D-ribitylamino)uracil = 6,7-dimethyl-8-(1-D-ribityl)lumazine + phosphate + 2 H2O + H(+). Its pathway is cofactor biosynthesis; riboflavin biosynthesis; riboflavin from 2-hydroxy-3-oxobutyl phosphate and 5-amino-6-(D-ribitylamino)uracil: step 1/2. Catalyzes the formation of 6,7-dimethyl-8-ribityllumazine by condensation of 5-amino-6-(D-ribitylamino)uracil with 3,4-dihydroxy-2-butanone 4-phosphate. This is the penultimate step in the biosynthesis of riboflavin. This chain is 6,7-dimethyl-8-ribityllumazine synthase, found in Methylibium petroleiphilum (strain ATCC BAA-1232 / LMG 22953 / PM1).